The chain runs to 394 residues: 1-deoxy-D-xylulose 5-phosphate reductoisomerase (394 aa).

Residues T12, G13, S14, I15, G38, N41, and N132 each coordinate NADPH. K133 is a binding site for 1-deoxy-D-xylulose 5-phosphate. E134 contacts NADPH. D156 lines the Mn(2+) pocket. 1-deoxy-D-xylulose 5-phosphate is bound by residues S157, E158, S182, and H205. E158 is a binding site for Mn(2+). Residue G211 coordinates NADPH. The 1-deoxy-D-xylulose 5-phosphate site is built by S218, N223, K224, and E227. A Mn(2+)-binding site is contributed by E227.

It belongs to the DXR family. It depends on Mg(2+) as a cofactor. Requires Mn(2+) as cofactor.

It catalyses the reaction 2-C-methyl-D-erythritol 4-phosphate + NADP(+) = 1-deoxy-D-xylulose 5-phosphate + NADPH + H(+). Its pathway is isoprenoid biosynthesis; isopentenyl diphosphate biosynthesis via DXP pathway; isopentenyl diphosphate from 1-deoxy-D-xylulose 5-phosphate: step 1/6. Catalyzes the NADPH-dependent rearrangement and reduction of 1-deoxy-D-xylulose-5-phosphate (DXP) to 2-C-methyl-D-erythritol 4-phosphate (MEP). In Paenarthrobacter aurescens (strain TC1), this protein is 1-deoxy-D-xylulose 5-phosphate reductoisomerase.